The primary structure comprises 420 residues: Putative U-box domain-containing protein 58 (420 aa).

Residues 4–168 (NSYVLFARLC…EDALAMKKED (165 aa)) enclose the MIF4G domain. Positions 139–352 (SRVVELEGNY…TAKEQMEKRQ (214 aa)) form a coiled coil. The U-box domain occupies 352–420 (QPPSSFFCPI…ALRSAIEELV (69 aa)).

It catalyses the reaction S-ubiquitinyl-[E2 ubiquitin-conjugating enzyme]-L-cysteine + [acceptor protein]-L-lysine = [E2 ubiquitin-conjugating enzyme]-L-cysteine + N(6)-ubiquitinyl-[acceptor protein]-L-lysine.. Its pathway is protein modification; protein ubiquitination. Functionally, functions as an E3 ubiquitin ligase. In Arabidopsis thaliana (Mouse-ear cress), this protein is Putative U-box domain-containing protein 58 (PUB58).